Reading from the N-terminus, the 350-residue chain is Phosphotriesterase-related protein (350 aa).

A divalent metal cation contacts are provided by His-22, His-24, Glu-169, His-201, His-230, and Asp-298.

Belongs to the metallo-dependent hydrolases superfamily. Phosphotriesterase family. Requires a divalent metal cation as cofactor.

The sequence is that of Phosphotriesterase-related protein from Drosophila mojavensis (Fruit fly).